Here is a 2787-residue protein sequence, read N- to C-terminus: Serine/threonine-protein kinase TEL1 (2787 aa).

The 593-residue stretch at 1734–2326 (EICQISLKIK…LYSVMSILLY (593 aa)) folds into the FAT domain. Residues 2434–2746 (NETVGITTTG…ENQESYRALK (313 aa)) enclose the PI3K/PI4K catalytic domain. Residues 2440-2446 (TTTGLSL) form a G-loop region. Positions 2609-2617 (GLGDRHLNN) are catalytic loop. The interval 2629–2653 (HIDLGIAFDQGKLLPIPELVPFRLT) is activation loop. Positions 2755–2787 (NGLSVESSVQDLIQQATDPSNLSVIYMGWSPFY) constitute an FATC domain.

Belongs to the PI3/PI4-kinase family. ATM subfamily. As to quaternary structure, interacts with XRS2 and associates with DNA double-strand breaks.

It localises to the nucleus. The protein localises to the chromosome. The protein resides in the telomere. It carries out the reaction L-seryl-[protein] + ATP = O-phospho-L-seryl-[protein] + ADP + H(+). The enzyme catalyses L-threonyl-[protein] + ATP = O-phospho-L-threonyl-[protein] + ADP + H(+). Its function is as follows. Serine/threonine protein kinase which activates checkpoint signaling upon genotoxic stresses such as ionizing radiation (IR), ultraviolet light (UV), or DNA replication stalling, thereby acting as a DNA damage sensor. Recognizes the substrate consensus sequence [ST]-Q. Recruited by the MRX-complex to sites of DNA lesions immediately after damage to initiate non-homologous end-joining (NHEJ). Subsequently displaced by the RPA complex in a reaction probably involving the SAE2 protein. Phosphorylates MRE11 and XRS2, 2 subunits of the MRX-complex. The phosphorylation of MRE11 is a feedback response from the checkpoint signaling pathway. Phosphorylates RAD9, CHK1 and RAD53, leading to the activation of the CHK1 and RAD23 kinases involved in the DNA damage response cascade. Phosphorylates histone H2A to form H2AS128ph (gamma-H2A) at sites of DNA damage, also involved in the regulation of DNA damage response mechanism. Also phosphorylates SLX4 and RTT107 which are involved in genome stability. Required for the control of telomere length and genome stability. This Saccharomyces cerevisiae (strain ATCC 204508 / S288c) (Baker's yeast) protein is Serine/threonine-protein kinase TEL1 (TEL1).